We begin with the raw amino-acid sequence, 435 residues long: MWRIWRCRLSFLFVTGCLLGALTAGLGSQMSDSVGRNVQAPAGVADASQEAGDVVEERTERTEEQVFAPGPPRRHSSESLFPRNPSVTARRRRNRRITLIATAVGVAVILAALYVLRRRRAQPPQEPEPPTRLRTPRPRAPSGQQQPSESEPPAGVPMKPGSLTLPFTCLGDTKVTFFGPSGRQHGFTPLYDPSPSKRVATVDAGANALFIGGGGLNGQFAKTLLEEAEKNGIRLTSVALSEHSQRIQQSLLRRAVKSPGKLVELDTGVASPVFARSFGFVPVVPGLMWKESKVGANVGVTFIHILKPEVTPYGNLNNNVMMYTVAPCGAPPDTTYSLAYKTTIAGVIRAAAAYNDTPAGQQYPVQGLRLPLLRGGIFRRNRSLESIGRANAEGTSLAITQYGPNFELQYMYDPSNAALHGLQEAESTYLASMLD.

A signal peptide spans 1–27 (MWRIWRCRLSFLFVTGCLLGALTAGLG). Residues 28-96 (SQMSDSVGRN…VTARRRRNRR (69 aa)) are Vacuolar-facing. The disordered stretch occupies residues 43–89 (GVADASQEAGDVVEERTERTEEQVFAPGPPRRHSSESLFPRNPSVTA). A compositionally biased stretch (basic and acidic residues) spans 55-64 (VEERTERTEE). The chain crosses the membrane as a helical span at residues 97-117 (ITLIATAVGVAVILAALYVLR). Residues 118 to 435 (RRRAQPPQEP…ESTYLASMLD (318 aa)) are Cytoplasmic-facing. The tract at residues 120-162 (RAQPPQEPEPPTRLRTPRPRAPSGQQQPSESEPPAGVPMKPGS) is disordered.

It localises to the parasitophorous vacuole membrane. Functionally, during host cell infection by tachyzoites, does not play a role in tethering the parasitophorous vacuole to the host mitochondria. The sequence is that of Mitochondrial association factor 1 form b0 from Toxoplasma gondii.